The primary structure comprises 638 residues: 9-cis-epoxycarotenoid dioxygenase NCED1, chloroplastic (638 aa).

The transit peptide at Met1 to Val80 directs the protein to the chloroplast. Composition is skewed to low complexity over residues Ala28 to Ser37, Ala44 to Pro69, and Thr92 to Ser102. Disordered stretches follow at residues Ala28–Val80 and Thr92–Ala113. Fe cation-binding residues include His331, His380, His446, and His624.

The protein belongs to the carotenoid oxygenase family. Fe(2+) serves as cofactor.

It is found in the plastid. The protein localises to the chloroplast. It catalyses the reaction a 9-cis-epoxycarotenoid + O2 = a 12'-apo-carotenal + 2-cis,4-trans-xanthoxin. The enzyme catalyses 9-cis-violaxanthin + O2 = (3S,5R,6S)-5,6-epoxy-3-hydroxy-5,6-dihydro-12'-apo-beta-caroten-12'-al + 2-cis,4-trans-xanthoxin. The catalysed reaction is 9'-cis-neoxanthin + O2 = (3S,5R,6R)-3,5-dihydroxy-6,7-didehydro-5,6-dihydro-12'-apo-beta-caroten-12'-al + 2-cis,4-trans-xanthoxin. In terms of biological role, has a 11,12(11',12') 9-cis epoxycarotenoid cleavage activity. Catalyzes the first step of abscisic-acid biosynthesis from carotenoids. This is 9-cis-epoxycarotenoid dioxygenase NCED1, chloroplastic from Oryza sativa subsp. japonica (Rice).